A 2537-amino-acid polypeptide reads, in one-letter code: Centrosomal protein of 192 kDa (2537 aa).

Disordered stretches follow at residues F69–S138 and H288–T308. A compositionally biased stretch (low complexity) spans S70 to S81. Over residues V106–Q122 the composition is skewed to polar residues. Basic and acidic residues predominate over residues H288–E298. S812 carries the post-translational modification Phosphoserine. Disordered stretches follow at residues V950–P1021, V1043–S1064, K1101–N1158, and A1182–H1234. Residues P960–P970 show a composition bias toward polar residues. Low complexity predominate over residues F984 to S1005. Composition is skewed to polar residues over residues P1046 to T1055 and T1103 to S1112. Residues E1128–S1141 are compositionally biased toward basic and acidic residues. The segment covering S1142 to N1158 has biased composition (polar residues). Positions E1195 to A1207 are enriched in basic and acidic residues. A compositionally biased stretch (polar residues) spans G1213–H1234. Phosphoserine occurs at positions 1755, 2098, and 2110. P2313 is subject to Hydroxyproline.

In terms of assembly, interacts with SHBG. Interacts with PLK4; this interaction mediates the formation of a ternary complex composed by PLK4, TENT5C and CEP192. Interacts with CCDC66. Post-translationally, hydroxylation by PHD1/EGLN2 at Pro-2313 promotes ubiquitination. Ubiquitinated by a SCF(SKP2) complex following proline hydroxylation. In terms of processing, ubiquitinated in a FBXL13-dependent manner, leading to proteasomal degradation.

The protein localises to the cytoplasm. Its subcellular location is the cytoskeleton. It localises to the microtubule organizing center. The protein resides in the centrosome. It is found in the centriole. In terms of biological role, required for mitotic centrosome maturation and bipolar spindle assembly. Appears to be a major regulator of pericentriolar material (PCM) recruitment, centrosome maturation, and centriole duplication. Centrosome-specific activating scaffold for AURKA and PLK1. This Homo sapiens (Human) protein is Centrosomal protein of 192 kDa.